We begin with the raw amino-acid sequence, 313 residues long: MTQWYPASPALWQGRDDSIEAPDARRLFQTVTRSETFSPENWQQKIALMGFACDEGVKRNAGRPGAAGAPDALRKALANMASHQGHERLVDLGNWVAPTPDLEGAQQALRDAVSRCLRAGMRTLVLGGGHETAFGHGAGVLDAFAQESVGIINLDAHLDLRQTDRATSGTPFRQLAQLCDAQSRAFHYACFGVSRAANTQALWREAQWRNVTVVEDLDCHDALAQMTQFIDKVDKIYLTIDLDVLPVWEMPAVSAPAALGVPLIQVLRLIEPVCRSGKLQAADLVEFNPRFDEDGAAARVAARLGWQIAHWWR.

His130, Asp155, His157, Asp159, Asp241, and Asp243 together coordinate Mn(2+).

It belongs to the arginase family. The cofactor is Mn(2+).

It catalyses the reaction N-formimidoyl-L-glutamate + H2O = formamide + L-glutamate. It functions in the pathway amino-acid degradation; L-histidine degradation into L-glutamate; L-glutamate from N-formimidoyl-L-glutamate (hydrolase route): step 1/1. Its function is as follows. Catalyzes the conversion of N-formimidoyl-L-glutamate to L-glutamate and formamide. The protein is Formimidoylglutamase of Salmonella enteritidis PT4 (strain P125109).